Reading from the N-terminus, the 230-residue chain is uncharacterized protein (230 aa).

The ABC transporter domain maps to 2 to 230 (IQLSNVRKSY…ASSGQRSVGE (229 aa)). 38-45 (GPSGSGKS) provides a ligand contact to ATP.

It belongs to the ABC transporter superfamily. Part of a complex composed of YknX, YknY and YknZ. The complex interacts with YknW.

It localises to the cell membrane. Its function is as follows. Part of an unusual four-component transporter, which is required for protection against the killing factor SdpC (sporulation-delaying protein). This is an uncharacterized protein from Bacillus subtilis (strain 168).